A 501-amino-acid polypeptide reads, in one-letter code: Dynein regulatory complex subunit 5 (501 aa).

The segment covering 1 to 23 has biased composition (polar residues); that stretch reads MQETVTTSALLDPSHSSVSTQDK. Disordered regions lie at residues 1 to 56 and 203 to 222; these read MQET…HPGA and PAQL…EMEE. Residues 24–34 are compositionally biased toward low complexity; sequence SSTGGHTSSTG. Polar residues predominate over residues 35-49; that stretch reads PQPSKPSITPVSAKS. LRR repeat units lie at residues 308-321, 335-355, 363-383, 391-411, and 419-439; these read VLEE…LIGD, RLRV…QSLA, NLIS…QALA, CLTT…TLLS, and TLTS…KQLL.

This sequence belongs to the DRC5 family. Component of the nexin-dynein regulatory complex (N-DRC). Interacts with DRC1. Interacts with FBXL13/DRC6, DRC3 and DRC7.

It localises to the cell projection. It is found in the cilium. Its subcellular location is the flagellum. The protein localises to the cytoplasm. The protein resides in the cytoskeleton. It localises to the flagellum axoneme. In terms of biological role, component of the nexin-dynein regulatory complex (N-DRC) a key regulator of ciliary/flagellar motility which maintains the alignment and integrity of the distal axoneme and regulates microtubule sliding in motile axonemes. May play a role in the assembly of N-DRC. May be required for sperm motility. The protein is Dynein regulatory complex subunit 5 (TCTE1) of Macaca fascicularis (Crab-eating macaque).